Consider the following 85-residue polypeptide: MPQIKSAIKRVKTNATANKRNAAELSKLRTAVRKFNEAVENDAKDVLDLEVKAARALDKAASKGLISKNKANRDKSRLSKKAANK.

The protein belongs to the bacterial ribosomal protein bS20 family.

Binds directly to 16S ribosomal RNA. This Lactobacillus johnsonii (strain CNCM I-12250 / La1 / NCC 533) protein is Small ribosomal subunit protein bS20.